A 388-amino-acid chain; its full sequence is Glucose-6-phosphate/phosphate translocator 1, chloroplastic (388 aa).

Residues 1 to 65 (MVLSVKQTLS…LRAKSPVVRC (65 aa)) constitute a chloroplast transit peptide. Helical transmembrane passes span 95–115 (LKIG…NIYN), 129–149 (STLS…VGIV), 158–178 (FWKT…AATV), 211–231 (FPTS…LSAL), 233–253 (ELNF…AFVF), 273–293 (YACL…AVEG), 305–325 (LATV…FYHL), and 363–383 (TPVQ…TFLY). The EamA domain occupies 112–229 (NIYNKKVLNA…IPIIGGCALS (118 aa)).

This sequence belongs to the TPT transporter family. GPT (TC 2.A.7.9) subfamily. Expressed in seeds, flowers, rosette leaves, and roots, with highest levels found in stamens. Found in the root cap, in guard cells and in mesophyll cells.

The protein localises to the plastid. Its subcellular location is the chloroplast membrane. It localises to the endoplasmic reticulum membrane. It is found in the peroxisome membrane. In terms of biological role, glucose 6-phosphate (Glc6P) transporter. Also transports inorganic phosphate, 3-phosphoglycerate, triose phosphates and, to a leser extent, phosphoenolpyruvate. Responsible for the transport of Glc6P into plastids of heterotrophic tissues where it can be used as a carbon source for starch biosynthesis, as substrate for fatty acid biosynthesis or as substrate for NADPH generation via the oxidative pentose phosphate pathway (OPPP). Required for pollen maturation and embryo sac development. Preferentially exchanges Glc6P for ribulose-5-phosphate (Ru5P) in reconstituted yeast proteoliposomes. May supply the substrate (Glc6P) for OPPP reactions inside peroxisomes and exchange it with the product Ru5P which leaves the organelle. In Arabidopsis thaliana (Mouse-ear cress), this protein is Glucose-6-phosphate/phosphate translocator 1, chloroplastic.